A 608-amino-acid polypeptide reads, in one-letter code: Aspartate--tRNA(Asp/Asn) ligase (608 aa).

E187 serves as a coordination point for L-aspartate. Residues 211–214 (QQFK) are aspartate. L-aspartate-binding residues include R233 and H461. Residue 233–235 (RDE) coordinates ATP. E495 is a binding site for ATP. R502 is a binding site for L-aspartate. 547–550 (GLDR) provides a ligand contact to ATP.

It belongs to the class-II aminoacyl-tRNA synthetase family. Type 1 subfamily. Homodimer.

The protein localises to the cytoplasm. The enzyme catalyses tRNA(Asx) + L-aspartate + ATP = L-aspartyl-tRNA(Asx) + AMP + diphosphate. Its function is as follows. Aspartyl-tRNA synthetase with relaxed tRNA specificity since it is able to aspartylate not only its cognate tRNA(Asp) but also tRNA(Asn). Reaction proceeds in two steps: L-aspartate is first activated by ATP to form Asp-AMP and then transferred to the acceptor end of tRNA(Asp/Asn). The polypeptide is Aspartate--tRNA(Asp/Asn) ligase (Chlorobium phaeobacteroides (strain BS1)).